The following is a 320-amino-acid chain: MAETTVKPTKLAVIGAGAVGSTLAFAAAQRGIAREIVLEDIAKERVEAEVLDMQHGSSFYPTVSIDGSDDPEICRDADMVVITAGPRQKPGQSRLELVGATVNILKAIMPNLVKVAPNAIYMLITNPVDIATHVAQKLTGLPENQIFGSGTNLDSARLRFLIAQQTGVNVKNVHAYIAGEHGDSEVPLWESATIGGVPMCDWTPLPGHDPLDADKREEIHQEVKNAAYKIINGKGATNYAIGMSGVDIIEAVLHDTNRILPVSSMLKDFHGISDICMSVPTLLNRQGVNNTINTPVSDKELAALKRSAETLKETAAQFGF.

Residues 18–19 (AV), Asp-40, and Arg-45 each bind NAD(+). Residues Gln-88, Arg-94, and 126–129 (NPVD) each bind substrate. NAD(+) is bound by residues 124-126 (ITN) and Ser-149. 154–157 (DSAR) contributes to the substrate binding site. Beta-D-fructose 1,6-bisphosphate is bound by residues Arg-159 and 171 to 176 (KNVHAY). His-181 functions as the Proton acceptor in the catalytic mechanism. Tyr-228 is subject to Phosphotyrosine. A substrate-binding site is contributed by Thr-237.

The protein belongs to the LDH/MDH superfamily. LDH family. As to quaternary structure, homotetramer.

Its subcellular location is the cytoplasm. It catalyses the reaction (S)-lactate + NAD(+) = pyruvate + NADH + H(+). The protein operates within fermentation; pyruvate fermentation to lactate; (S)-lactate from pyruvate: step 1/1. With respect to regulation, allosterically activated by fructose 1,6-bisphosphate (FBP). Catalyzes the conversion of lactate to pyruvate. The protein is L-lactate dehydrogenase 2 of Bifidobacterium longum subsp. longum (strain ATCC 15707 / DSM 20219 / JCM 1217 / NCTC 11818 / E194b).